Consider the following 978-residue polypeptide: Sensor histidine kinase TodS (978 aa).

The 72-residue stretch at 32–103 folds into the PAS 1 domain; the sequence is CEEHARIIFD…TQKRLVETAS (72 aa). Positions 108–162 constitute a PAC 1 domain; it reads VRCDVEILGKSGGREVIAVDFSLLPICNEEGSIVYLLAEGRNITDKKKAEAMLAL. Residues 187 to 405 enclose the Histidine kinase 1 domain; that stretch reads KVSHELRTPL…LFQVKLPLNA (219 aa). Residue His-190 is modified to Phosphohistidine; by autocatalysis. Positions 452–567 constitute a Response regulatory domain; the sequence is RVLIVEDNPD…ELRARVSNLV (116 aa). Asp-500 is modified (4-aspartylphosphate). Positions 611 to 681 constitute a PAS 2 domain; it reads SEARWKAVYE…QRLANLLQGG (71 aa). The region spanning 685–737 is the PAC 2 domain; the sequence is YSVERSYLCKNGSTIWANASVSLMPQRVGESPVILQIIDDITEKKQAQENLNQ. One can recognise a Histidine kinase 2 domain in the interval 757–974; that stretch reads YIAHEINQPL…CFLVSIPARQ (218 aa). His-760 bears the Phosphohistidine mark.

Homodimer. Binds as a dimer to a pseudopalindromic sequence. In terms of processing, autophosphorylated. Activation requires a sequential transfer of a phosphate group from a His in the primary transmitter domain, to an Asp in the receiver domain and to a His in the secondary transmitter domain.

It localises to the cytoplasm. It carries out the reaction ATP + protein L-histidine = ADP + protein N-phospho-L-histidine.. Its function is as follows. Member of the two-component regulatory system TodS/TodT involved in the regulation of toluene degradation. Phosphorylates TodT via a four-step phosphorelay in response to toluene. This is Sensor histidine kinase TodS (todS) from Pseudomonas putida (strain ATCC 700007 / DSM 6899 / JCM 31910 / BCRC 17059 / LMG 24140 / F1).